The primary structure comprises 125 residues: Somatostatin-2 (125 aa).

A signal peptide spans 1-24 (MQCIRCPAILALLALVLCGPSVSS). Pyrrolidone carboxylic acid is present on Gln25. The propeptide occupies 25–97 (QLDREQSDNQ…ATGGRMNLER (73 aa)). The disordered stretch occupies residues 82–107 (AEDASMATGGRMNLERSVDSTNNLPP). Cys114 and Cys125 form a disulfide bridge. Lys120 bears the 5-hydroxylysine mark.

It belongs to the somatostatin family.

It localises to the secreted. Somatostatin inhibits the release of somatotropin. The protein is Somatostatin-2 (sst2) of Lophius americanus (American angler).